The chain runs to 82 residues: Penaeidin-3d (82 aa).

Residues 1 to 19 (MRLVVCLVFLASFALVCQG) form the signal peptide. Glutamine 20 carries the post-translational modification Pyrrolidone carboxylic acid. 3 disulfides stabilise this stretch: cysteine 51–cysteine 66, cysteine 55–cysteine 73, and cysteine 67–cysteine 74. Serine 81 carries the serine amide modification.

Belongs to the penaeidin family.

It is found in the cytoplasmic granule. Antibacterial and antifungal activity. Presents chitin-binding activity. The sequence is that of Penaeidin-3d from Penaeus vannamei (Whiteleg shrimp).